The sequence spans 567 residues: Oxygen-dependent choline dehydrogenase (567 aa).

Residue 6 to 35 (DYIIVGAGSAGNTLATRLTEDEGVTVLLLE) participates in FAD binding. H475 acts as the Proton acceptor in catalysis.

Belongs to the GMC oxidoreductase family. It depends on FAD as a cofactor.

The enzyme catalyses choline + A = betaine aldehyde + AH2. It carries out the reaction betaine aldehyde + NAD(+) + H2O = glycine betaine + NADH + 2 H(+). It participates in amine and polyamine biosynthesis; betaine biosynthesis via choline pathway; betaine aldehyde from choline (cytochrome c reductase route): step 1/1. Functionally, involved in the biosynthesis of the osmoprotectant glycine betaine. Catalyzes the oxidation of choline to betaine aldehyde and betaine aldehyde to glycine betaine at the same rate. The sequence is that of Oxygen-dependent choline dehydrogenase from Pseudomonas fluorescens (strain SBW25).